Consider the following 282-residue polypeptide: RsbT co-antagonist protein RsbRC (282 aa).

Phosphoserine is present on residues serine 165 and serine 174. Residues 165 to 276 (SAPVIVLFHS…STLASAIASD (112 aa)) form the STAS domain. Threonine 186 is subject to Phosphothreonine.

As to quaternary structure, probably present in the stressosome with RsbRA, RsbRB, RsbRD and RsbS. In terms of processing, phosphorylated by RsbT.

Functionally, one of 4 functionally non-identical RsbR paralogs, it functions in the environmental signaling branch of the general stress response. Negative regulator of sigma-B activity. Non-phosphorylated RsbS binds to RsbT, preventing its association with RsbU. Requires any one of RsbRA, RsbRB, RsbRC or RsbRD to sequester RsbT. When RsbS and the RsbR paralog(s) are phosphorylated, they release RsbT, which can then bind and activate RsbU. The chain is RsbT co-antagonist protein RsbRC (rsbRC) from Bacillus subtilis (strain 168).